We begin with the raw amino-acid sequence, 201 residues long: Adenylyl-sulfate kinase (201 aa).

The disordered stretch occupies residues 1 to 23; it reads MALHDENVVWHSHPVTPQQREQH. Position 35 to 42 (35 to 42) interacts with ATP; the sequence is GLSGSGKS. Serine 109 serves as the catalytic Phosphoserine intermediate.

This sequence belongs to the APS kinase family.

It catalyses the reaction adenosine 5'-phosphosulfate + ATP = 3'-phosphoadenylyl sulfate + ADP + H(+). It participates in sulfur metabolism; hydrogen sulfide biosynthesis; sulfite from sulfate: step 2/3. In terms of biological role, catalyzes the synthesis of activated sulfate. The sequence is that of Adenylyl-sulfate kinase from Escherichia coli O127:H6 (strain E2348/69 / EPEC).